The sequence spans 428 residues: Adenylosuccinate synthetase (428 aa).

Residues 12 to 18 (GDEGKGK) and 40 to 42 (GHT) each bind GTP. Residue D13 is the Proton acceptor of the active site. 2 residues coordinate Mg(2+): D13 and G40. Residues 13 to 16 (DEGK), 38 to 41 (NAGH), T129, R143, Q224, T239, and R303 contribute to the IMP site. H41 (proton donor) is an active-site residue. Position 299-305 (299-305 (VTTGRIR)) interacts with substrate. Residues R305, 331–333 (KVD), and 410–412 (AYG) each bind GTP.

Belongs to the adenylosuccinate synthetase family. Homodimer. The cofactor is Mg(2+).

Its subcellular location is the cytoplasm. The catalysed reaction is IMP + L-aspartate + GTP = N(6)-(1,2-dicarboxyethyl)-AMP + GDP + phosphate + 2 H(+). It functions in the pathway purine metabolism; AMP biosynthesis via de novo pathway; AMP from IMP: step 1/2. Functionally, plays an important role in the de novo pathway of purine nucleotide biosynthesis. Catalyzes the first committed step in the biosynthesis of AMP from IMP. In Francisella tularensis subsp. novicida (strain U112), this protein is Adenylosuccinate synthetase.